The chain runs to 176 residues: Glycine-rich RNA-binding protein 7 (176 aa).

A2 carries the N-acetylalanine modification. Positions A2 to N41 are required for RNA chaperone activity. In terms of domain architecture, RRM spans Y8 to S86. At R49 the chain carries ADP-ribosylarginine; by HopU1. Residues E83–Y103 are disordered. The segment covering G88 to Y103 has biased composition (gly residues). The glycine-rich (GR) required for cell-to-cell movement stretch occupies residues G88–G175. A nuclear targeting sequence (M9) region spans residues G97–Y148. Phosphoserine occurs at positions 105 and 117. Residues Y131–W176 form a disordered region.

This sequence belongs to the GR-RBP family. In terms of assembly, interacts with TRN1. Interacts with the Pseudomonas syringae type III effector HopU1. Binds to small phloem-mobile single-stranded RNAs (ss-sRNA, e.g. small interfering RNA (siRNA) and microRNA (miRNA)) in the phloeme exudate, including viral-derived sRNA (vsiRNA). ADP-ribosylated by the Pseudomonas syringae type III effector HopU1. ADP-ribosylation reduces the ability of the protein to bind RNA. In terms of tissue distribution, ubiquitous with strong expression in guard cell.

Its subcellular location is the cytoplasm. It is found in the nucleus. It localises to the secreted. In terms of biological role, plays a role in RNA transcription or processing during stress. Binds RNAs and DNAs sequence with a preference to single-stranded nucleic acids. Displays strong affinity to poly(U) and poly(G) sequence. Involved in mRNA alternative splicing of numerous targets by modulating splice site selection. Negatively regulates the circadian oscillations of its own transcript as well as RBG8 transcript. Forms an interlocked post-transcriptional negative feedback loop with the RBG8 autoregulatory circuit. Both proteins negatively autoregulate and reciprocally crossregulate by binding to their pre-mRNAs and promoting unproductive splicing coupled to degradation via the NMD pathway. Involved in the regulation of abscisic acid and stress responses. Affects the growth and stress tolerance under high salt and dehydration stress conditions, and also confers freezing tolerance, particularly via the regulation of stomatal opening and closing in the guard cells. Exhibits RNA chaperone activity during the cold adaptation process. Involved in the export of mRNAs from the nucleus to the cytoplasm under cold stress conditions. Target of the Pseudomonas syringae type III effector HopU1, which could probably be involved in plant innate immunity. Component of the flowering autonomous pathway which promotes floral transition, at least partly by down-regulating FLC. Mediates cell-to-cell trafficking of RNA interference (RNAi) signals (small RNAs (sRNA), e.g. small interfering RNA (siRNA) and microRNA (miRNA)) which regulate growth and development, as well as responses to environmental inputs, including pathogen attack; can compromise zucchini yellow mosaic virus (ZYMV) and tobacco rattle virus (TRV) infections at the early stage. This chain is Glycine-rich RNA-binding protein 7, found in Arabidopsis thaliana (Mouse-ear cress).